Consider the following 355-residue polypeptide: Guanine nucleotide-binding protein alpha-2 subunit (355 aa).

A disordered region spans residues 1 to 20 (MCFGGRGKDDEAEASRSREL). Residues 33-355 (KEVKLLLLGA…IQRNLKQLIL (323 aa)) enclose the G-alpha domain. Positions 36 to 49 (KLLLLGAGESGKST) are G1 motif. Positions 44, 45, 46, 47, 48, 49, 151, 176, 182, 204, 270, 271, 273, and 328 each coordinate GTP. Residue serine 48 participates in Mg(2+) binding. Positions 174-182 (DLLRSRLRT) are G2 motif. Threonine 182 is a Mg(2+) binding site. Positions 197 to 206 (YRMFDVGGQR) are G3 motif. Residues 266 to 273 (ILFLNKID) are G4 motif. The interval 326–331 (TNATDT) is G5 motif.

Belongs to the G-alpha family. G(q) subfamily. In terms of assembly, g proteins are composed of 3 units; alpha, beta and gamma. The alpha chain contains the guanine nucleotide binding site. It depends on Mg(2+) as a cofactor.

In terms of biological role, guanine nucleotide-binding proteins (G proteins) are involved as modulators or transducers in various transmembrane signaling systems. The protein is Guanine nucleotide-binding protein alpha-2 subunit (gna-2) of Neurospora crassa (strain ATCC 24698 / 74-OR23-1A / CBS 708.71 / DSM 1257 / FGSC 987).